The chain runs to 257 residues: Adenylate kinase (257 aa).

ATP is bound at residue 51-56; that stretch reads GAGKGT. The tract at residues 71-100 is NMP; sequence ATGDMLRSQVAKKTELGKEAKKIMDQGGLV. Residues threonine 72, arginine 77, 98–100, 127–130, and glutamine 134 contribute to the AMP site; these read GLV and GFPR. The tract at residues 168-205 is LID; that stretch reads GRLVHPASGRSYHKIFNPPKQEMKDDITGEPLIQRSDD. Residues arginine 169 and 178 to 179 each bind ATP; that span reads SY. AMP-binding residues include arginine 202 and arginine 213. Glutamine 241 lines the ATP pocket.

The protein belongs to the adenylate kinase family. AK2 subfamily. In terms of assembly, monomer.

The protein localises to the cytoplasm. It is found in the cytosol. It localises to the mitochondrion intermembrane space. It carries out the reaction AMP + ATP = 2 ADP. Its function is as follows. Catalyzes the reversible transfer of the terminal phosphate group between ATP and AMP. Plays an important role in cellular energy homeostasis and in adenine nucleotide metabolism. Adenylate kinase activity is critical for regulation of the phosphate utilization and the AMP de novo biosynthesis pathways. This chain is Adenylate kinase (adk1), found in Aspergillus terreus (strain NIH 2624 / FGSC A1156).